The chain runs to 253 residues: Oxidoreductase AOL_s00215g277 (253 aa).

The helical transmembrane segment at 181 to 203 (FFGYWLTVILGYYIGSLLGYQPF) threads the bilayer.

Belongs to the oxidoreductase OpS7 family.

It localises to the membrane. The protein operates within secondary metabolite biosynthesis; terpenoid biosynthesis. Its function is as follows. Oxidoreductase; part of the gene cluster that mediates the biosynthesis of sesquiterpenyl epoxy-cyclohexenoids (SECs) such as anthrobotrisins and arthrosporols, metabolites that possess a novel hybrid carbon skeleton consisting of a polyketide-derived epoxycyclohexenol combined with a terpenoid-derived monocyclic sesquiterpenol substructure (PKS-PTS hybrid). The SEC pathway plays an important role for fungal soil colonization via decreasing fungal nematode-capturing ability. Within the pathway, the oxidoreductase AOL_s00215g277 seems to play a role in the farnesylation step of toluquinol to produce farnesyl hydroquinone, the hybrid precursor for biosynthesis of SECs. The pathway begins with the biosynthesis of 6-methylsalicylic acid (6-MSA), the first precursor of the polyketide-derived epoxycyclohexenol in arthrosporols, by the polyketide synthase (PKS) AOL_s00215g283 via condensation of 1 acetate and 3 malonate units. The 6-methylsalicylic acid decarboxylase AOL_s00215g281 then catalyzes the decarboxylation of 6-methylsalicylic acid to yield m-cresol. The cytochrome P450 monooxygenase AOL_s00215g282 further oxidizes m-cresol to yield toluquinol. With the assistance of the oxidoreductase AOL_s00215g277, the polyprenyl transferase AOL_s00215g276 catalyzes the farnesylation of toluquinol to produce farnesyl hydroquinone, the hybrid precursor for biosynthesis of SECs. Farnesyl hydroquinone undergoes epoxidation and then subsequent dehydrogenation to form farnesyl epoxy-quinone, the first and simplest SEC. The cytochrome P450 monooxygenase AOL_s00215g278 and the FAD-dependent monooxygenase AOL_s00215g279 might be involved in the oxygenation of the phenol moiety, most likely in the epoxy formation. The cytochrome P450 monooxygenases AOL_s00215g274 and AOL_s00215g280 are involved in specific regional ketone reductions at respectively C-4 and C-1 of farnesyl epoxy-quinone PubMed:33823587. The polypeptide is Oxidoreductase AOL_s00215g277 (Arthrobotrys oligospora (strain ATCC 24927 / CBS 115.81 / DSM 1491) (Nematode-trapping fungus)).